The chain runs to 114 residues: T cell receptor beta variable 5-6 (114 aa).

Residues 1–21 form the signal peptide; sequence MGPGLLCWALLCLLGAGLVDA. The 93-residue stretch at 22–114 folds into the Ig-like domain; that stretch reads GVTQSPTHLI…SALYLCASSL (93 aa). The cysteines at positions 42 and 110 are disulfide-linked. The N-linked (GlcNAc...) asparagine glycan is linked to Asn90.

Alpha-beta TR is a heterodimer composed of an alpha and beta chain; disulfide-linked. The alpha-beta TR is associated with the transmembrane signaling CD3 coreceptor proteins to form the TR-CD3 (TcR or TCR). The assembly of alpha-beta TR heterodimers with CD3 occurs in the endoplasmic reticulum where a single alpha-beta TR heterodimer associates with one CD3D-CD3E heterodimer, one CD3G-CD3E heterodimer and one CD247 homodimer forming a stable octameric structure. CD3D-CD3E and CD3G-CD3E heterodimers preferentially associate with TR alpha and TR beta chains, respectively. The association of the CD247 homodimer is the last step of TcR assembly in the endoplasmic reticulum and is required for transport to the cell surface.

It is found in the cell membrane. Its function is as follows. V region of the variable domain of T cell receptor (TR) beta chain that participates in the antigen recognition. Alpha-beta T cell receptors are antigen specific receptors which are essential to the immune response and are present on the cell surface of T lymphocytes. Recognize peptide-major histocompatibility (MH) (pMH) complexes that are displayed by antigen presenting cells (APC), a prerequisite for efficient T cell adaptive immunity against pathogens. Binding of alpha-beta TR to pMH complex initiates TR-CD3 clustering on the cell surface and intracellular activation of LCK that phosphorylates the ITAM motifs of CD3G, CD3D, CD3E and CD247 enabling the recruitment of ZAP70. In turn ZAP70 phosphorylates LAT, which recruits numerous signaling molecules to form the LAT signalosome. The LAT signalosome propagates signal branching to three major signaling pathways, the calcium, the mitogen-activated protein kinase (MAPK) kinase and the nuclear factor NF-kappa-B (NF-kB) pathways, leading to the mobilization of transcription factors that are critical for gene expression and essential for T cell growth and differentiation. The T cell repertoire is generated in the thymus, by V-(D)-J rearrangement. This repertoire is then shaped by intrathymic selection events to generate a peripheral T cell pool of self-MH restricted, non-autoaggressive T cells. Post-thymic interaction of alpha-beta TR with the pMH complexes shapes TR structural and functional avidity. The polypeptide is T cell receptor beta variable 5-6 (Homo sapiens (Human)).